Reading from the N-terminus, the 210-residue chain is Holliday junction resolvase RecU (210 aa).

The Mg(2+) site is built by T87, D89, E102, and Q121.

The protein belongs to the RecU family. It depends on Mg(2+) as a cofactor.

The protein localises to the cytoplasm. It carries out the reaction Endonucleolytic cleavage at a junction such as a reciprocal single-stranded crossover between two homologous DNA duplexes (Holliday junction).. In terms of biological role, endonuclease that resolves Holliday junction intermediates in genetic recombination. Cleaves mobile four-strand junctions by introducing symmetrical nicks in paired strands. Promotes annealing of linear ssDNA with homologous dsDNA. Required for DNA repair, homologous recombination and chromosome segregation. This is Holliday junction resolvase RecU from Lactobacillus delbrueckii subsp. bulgaricus (strain ATCC 11842 / DSM 20081 / BCRC 10696 / JCM 1002 / NBRC 13953 / NCIMB 11778 / NCTC 12712 / WDCM 00102 / Lb 14).